The following is a 298-amino-acid chain: Zinc-alpha-2-glycoprotein (298 aa).

Positions 1 to 20 (MVRMVPVLLSLLLLLGPAVP) are cleaved as a signal peptide. At Q21 the chain carries Pyrrolidone carboxylic acid. N-linked (GlcNAc...) (complex) asparagine glycosylation is present at N109. N112 carries an N-linked (GlcNAc...) asparagine glycan. 2 disulfides stabilise this stretch: C123–C186 and C225–C280. A glycan (N-linked (GlcNAc...) (complex) asparagine) is linked at N128. Positions 207 to 292 (PSVVVTSHQA…QHSSLAQPLV (86 aa)) constitute an Ig-like C1-type domain. The N-linked (GlcNAc...) asparagine glycan is linked to N259.

This sequence belongs to the MHC class I family. As to quaternary structure, interacts with PIP. N-glycosylated. N-glycan at Asn-128: Hex5HexNAc4. Blood plasma, seminal plasma, urine, saliva, sweat, epithelial cells of various human glands, liver.

It is found in the secreted. Its function is as follows. Stimulates lipid degradation in adipocytes and causes the extensive fat losses associated with some advanced cancers. May bind polyunsaturated fatty acids. The sequence is that of Zinc-alpha-2-glycoprotein (AZGP1) from Homo sapiens (Human).